The following is a 145-amino-acid chain: Hemoglobin subunit beta-2 (145 aa).

The region spanning 2 to 145 is the Globin domain; the sequence is HLTAEDRKEI…GVSHALGHGY (144 aa). Heme b contacts are provided by His63 and His92.

Belongs to the globin family. As to quaternary structure, minor hemoglobin is a tetramer of two alpha-2 chains and two beta-2 chains. Red blood cells.

Its function is as follows. Involved in oxygen transport from the lung to the various peripheral tissues. The protein is Hemoglobin subunit beta-2 (HBB2) of Triturus cristatus (Great crested newt).